A 122-amino-acid polypeptide reads, in one-letter code: Acidic phospholipase A2 Tpu-E6c (122 aa).

Cystine bridges form between C26/C115, C28/C44, C43/C95, C49/C122, C50/C88, C57/C81, and C75/C86. Residues Y27, G29, and G31 each coordinate Ca(2+). H47 is a catalytic residue. D48 lines the Ca(2+) pocket. The active site involves D89.

Monomer. It depends on Ca(2+) as a cofactor. Expressed by the venom gland.

The protein localises to the secreted. The enzyme catalyses a 1,2-diacyl-sn-glycero-3-phosphocholine + H2O = a 1-acyl-sn-glycero-3-phosphocholine + a fatty acid + H(+). Functionally, snake venom phospholipase A2 (PLA2) that impairs hemostasis. It weakly inhibits ADP-induced platelet aggregation when tested on platelet rich plasma from human and rabbit blood (15-25% of inhibition at 5-10 ug of enzyme), and dose-dependently inhibits blood coagulation, possibly by inhibiting thrombin activation. Exhibits high hydrolytic activities toward L-dipalmitoyl phosphatidylcholine. PLA2 catalyzes the calcium-dependent hydrolysis of the 2-acyl groups in 3-sn-phosphoglycerides. This is Acidic phospholipase A2 Tpu-E6c from Craspedocephalus puniceus (Flat-nosed pitviper).